We begin with the raw amino-acid sequence, 1193 residues long: DNA-directed RNA polymerase subunit beta (1193 aa).

The segment covering E1153–D1162 has biased composition (acidic residues). A disordered region spans residues E1153–E1193. Residues D1184–E1193 show a composition bias toward basic and acidic residues.

Belongs to the RNA polymerase beta chain family. The RNAP catalytic core consists of 2 alpha, 1 beta, 1 beta' and 1 omega subunit. When a sigma factor is associated with the core the holoenzyme is formed, which can initiate transcription.

It carries out the reaction RNA(n) + a ribonucleoside 5'-triphosphate = RNA(n+1) + diphosphate. Its function is as follows. DNA-dependent RNA polymerase catalyzes the transcription of DNA into RNA using the four ribonucleoside triphosphates as substrates. In Bacillus licheniformis (strain ATCC 14580 / DSM 13 / JCM 2505 / CCUG 7422 / NBRC 12200 / NCIMB 9375 / NCTC 10341 / NRRL NRS-1264 / Gibson 46), this protein is DNA-directed RNA polymerase subunit beta.